Reading from the N-terminus, the 943-residue chain is Isoleucine--tRNA ligase (943 aa).

The 'HIGH' region signature appears at 58 to 68 (PYANGKIHIGH). Glu-567 contributes to the L-isoleucyl-5'-AMP binding site. The 'KMSKS' region signature appears at 608-612 (KMSKS). Lys-611 is an ATP binding site. 4 residues coordinate Zn(2+): Cys-906, Cys-909, Cys-926, and Cys-929.

This sequence belongs to the class-I aminoacyl-tRNA synthetase family. IleS type 1 subfamily. In terms of assembly, monomer. Zn(2+) is required as a cofactor.

It is found in the cytoplasm. The catalysed reaction is tRNA(Ile) + L-isoleucine + ATP = L-isoleucyl-tRNA(Ile) + AMP + diphosphate. In terms of biological role, catalyzes the attachment of isoleucine to tRNA(Ile). As IleRS can inadvertently accommodate and process structurally similar amino acids such as valine, to avoid such errors it has two additional distinct tRNA(Ile)-dependent editing activities. One activity is designated as 'pretransfer' editing and involves the hydrolysis of activated Val-AMP. The other activity is designated 'posttransfer' editing and involves deacylation of mischarged Val-tRNA(Ile). The sequence is that of Isoleucine--tRNA ligase from Pseudomonas putida (strain W619).